The primary structure comprises 531 residues: NADH-quinone oxidoreductase subunit N (531 aa).

Helical transmembrane passes span 8–28 (VEYF…AGVL), 41–61 (AQVT…IVVA), 81–101 (ATLF…VFMA), 146–166 (GATQ…MMVF), 172–192 (LLTM…MCGL), 208–228 (FLLG…LYGA), 250–270 (ALAG…AVPF), 282–302 (PTPI…GALL), 318–338 (PVLW…AVNQ), 350–370 (VAHV…GLSA), 372–392 (LFYL…VGLV), 418–438 (IVGV…LTSG), 453–473 (GAVP…YFYV), and 500–520 (AAIA…QPVL).

The protein belongs to the complex I subunit 2 family. As to quaternary structure, NDH-1 is composed of 14 different subunits. Subunits NuoA, H, J, K, L, M, N constitute the membrane sector of the complex.

Its subcellular location is the cell membrane. It catalyses the reaction a quinone + NADH + 5 H(+)(in) = a quinol + NAD(+) + 4 H(+)(out). NDH-1 shuttles electrons from NADH, via FMN and iron-sulfur (Fe-S) centers, to quinones in the respiratory chain. The immediate electron acceptor for the enzyme in this species is believed to be a menaquinone. Couples the redox reaction to proton translocation (for every two electrons transferred, four hydrogen ions are translocated across the cytoplasmic membrane), and thus conserves the redox energy in a proton gradient. In Mycobacterium bovis (strain ATCC BAA-935 / AF2122/97), this protein is NADH-quinone oxidoreductase subunit N.